Reading from the N-terminus, the 150-residue chain is Con-Ins Im1 (150 aa).

The signal sequence occupies residues 1–25; the sequence is MATSLLSPLLVAMLGFLLHVHVARA. Disulfide bonds link Cys-31–Cys-133, Cys-46–Cys-136, Cys-58–Cys-149, and Cys-135–Cys-140. A propeptide spans 64–111 (c peptide); sequence GYAGGQRQLRKRTSMIDSDDMEAEGGSRGGFLMSKRRALSYLQKETNP. Glu-144 is subject to 4-carboxyglutamate; partial.

Belongs to the insulin family. In terms of assembly, heterodimer of A and B chains; disulfide-linked. As to expression, expressed by the venom gland.

The protein resides in the secreted. Functionally, this venom insulin facilitates prey capture by rapidly inducing hypoglycemic shock. Intraperitoneal injection of this peptide into zebrafish lowers blood glucose with the same potency than human insulin. In vivo, when applied to water, this peptide reduces overall locomotor activity of zebrafish larvae, observed as a significant decrease in the percentage of time spent swimming and movement frequency. This is Con-Ins Im1 from Conus imperialis (Imperial cone).